The following is a 155-amino-acid chain: Fibroblast growth factor 1 (155 aa).

N-acetylalanine is present on A2. The propeptide occupies A2–K15. Residue N33 coordinates heparin. The segment at K127 to K143 is heparin-binding.

Belongs to the heparin-binding growth factors family. Monomer. Homodimer. Interacts with FGFR1, FGFR2, FGFR3 and FGFR4. Affinity between fibroblast growth factors (FGFs) and their receptors is increased by heparan sulfate glycosaminoglycans that function as coreceptors. Found in a complex with FGFBP1, FGF1 and FGF2. Interacts with FGFBP1. Part of a Cu(2+)-dependent multiprotein aggregate containing FGF1, S100A13 and SYT1. Interacts with SYT1. Interacts with S100A13. Interacts with LRRC59. Interacts with CSNKA, CSNKB and FIBP. While binding with LRRC59, CSNKA and FIBP seem mutually exclusive, CSNKB and FIBP may cooperatively interact with FGF1. Forms a ternary complex with FGFR1 and ITGAV:ITGB3 and induces the recruitment of PTPN11 to the complex. In the nucleus, phosphorylated by PKC/PRKCD.

It is found in the secreted. The protein localises to the cytoplasm. The protein resides in the cell cortex. Its subcellular location is the cytosol. It localises to the nucleus. Its function is as follows. Plays an important role in the regulation of cell survival, cell division, angiogenesis, cell differentiation and cell migration. Functions as a potent mitogen in vitro. Acts as a ligand for FGFR1 and integrins. Binds to FGFR1 in the presence of heparin leading to FGFR1 dimerization and activation via sequential autophosphorylation on tyrosine residues which act as docking sites for interacting proteins, leading to the activation of several signaling cascades. Binds to integrin ITGAV:ITGB3. Its binding to integrin, subsequent ternary complex formation with integrin and FGFR1, and the recruitment of PTPN11 to the complex are essential for FGF1 signaling. Induces the phosphorylation and activation of FGFR1, FRS2, MAPK3/ERK1, MAPK1/ERK2 and AKT1. Can induce angiogenesis. The protein is Fibroblast growth factor 1 (FGF1) of Ovis aries (Sheep).